Reading from the N-terminus, the 313-residue chain is ADP-L-glycero-D-manno-heptose-6-epimerase (313 aa).

NADP(+) is bound by residues 10-11 (FI), 31-32 (DD), Arg-38, Lys-53, 75-79 (EGACS), and Asn-92. The Proton acceptor role is filled by Tyr-139. Lys-143 is a binding site for NADP(+). A substrate-binding site is contributed by Asn-168. Positions 169 and 177 each coordinate NADP(+). The active-site Proton acceptor is the Lys-177. Residues Lys-179, His-186, 200–203 (FEGW), Arg-213, and Tyr-277 each bind substrate.

Belongs to the NAD(P)-dependent epimerase/dehydratase family. HldD subfamily. In terms of assembly, homopentamer. NADP(+) serves as cofactor.

The catalysed reaction is ADP-D-glycero-beta-D-manno-heptose = ADP-L-glycero-beta-D-manno-heptose. Its pathway is nucleotide-sugar biosynthesis; ADP-L-glycero-beta-D-manno-heptose biosynthesis; ADP-L-glycero-beta-D-manno-heptose from D-glycero-beta-D-manno-heptose 7-phosphate: step 4/4. Catalyzes the interconversion between ADP-D-glycero-beta-D-manno-heptose and ADP-L-glycero-beta-D-manno-heptose via an epimerization at carbon 6 of the heptose. The protein is ADP-L-glycero-D-manno-heptose-6-epimerase of Marinobacter nauticus (strain ATCC 700491 / DSM 11845 / VT8) (Marinobacter aquaeolei).